The chain runs to 338 residues: 1-aminocyclopropane-1-carboxylate deaminase (338 aa).

K51 bears the N6-(pyridoxal phosphate)lysine mark. The active-site Nucleophile is the S78.

This sequence belongs to the ACC deaminase/D-cysteine desulfhydrase family. As to quaternary structure, homotrimer. The cofactor is pyridoxal 5'-phosphate.

It catalyses the reaction 1-aminocyclopropane-1-carboxylate + H2O = 2-oxobutanoate + NH4(+). Catalyzes a cyclopropane ring-opening reaction, the irreversible conversion of 1-aminocyclopropane-1-carboxylate (ACC) to ammonia and alpha-ketobutyrate. Allows growth on ACC as a nitrogen source. This Burkholderia ambifaria (strain MC40-6) protein is 1-aminocyclopropane-1-carboxylate deaminase.